A 290-amino-acid polypeptide reads, in one-letter code: 33 kDa chaperonin (290 aa).

Intrachain disulfides connect C235-C237 and C268-C271.

The protein belongs to the HSP33 family. Under oxidizing conditions two disulfide bonds are formed involving the reactive cysteines. Under reducing conditions zinc is bound to the reactive cysteines and the protein is inactive.

It is found in the cytoplasm. Redox regulated molecular chaperone. Protects both thermally unfolding and oxidatively damaged proteins from irreversible aggregation. Plays an important role in the bacterial defense system toward oxidative stress. The polypeptide is 33 kDa chaperonin (Streptococcus pyogenes serotype M49 (strain NZ131)).